Consider the following 260-residue polypeptide: Ribosomal RNA small subunit methyltransferase J (260 aa).

S-adenosyl-L-methionine-binding positions include 125 to 126 (ER) and Asp179. Positions 234–260 (IDGPKPSHALDGKSSRYDIYPKKALKP) are disordered. Basic and acidic residues predominate over residues 241–254 (HALDGKSSRYDIYP).

Belongs to the methyltransferase superfamily. RsmJ family.

Its subcellular location is the cytoplasm. It catalyses the reaction guanosine(1516) in 16S rRNA + S-adenosyl-L-methionine = N(2)-methylguanosine(1516) in 16S rRNA + S-adenosyl-L-homocysteine + H(+). Its function is as follows. Specifically methylates the guanosine in position 1516 of 16S rRNA. This is Ribosomal RNA small subunit methyltransferase J from Pseudomonas fluorescens (strain SBW25).